The sequence spans 289 residues: MEEKQEKVAEFYDKVTGAWDLFYGVHLHDGYYEPGTTATMAISQDAVIRMIDELLRFAGVSEDPAKKPRSMLDVGSGLGGTCVYVAKKYDIQCTGITISPNQVKYAQDYAATEGVENKVSFDCGDALDMPYSDGKFDVVFTINCIEHVHDKEKFIREMVRVAAPGAAIIIASQAHPNLSPGESLKPRDKKILQKICDGAGAVSLCSSDDYVRWLTPLPVKEIKAADWTQNITPLYPLLMKEAFTWKGFTSIVLKGGWRAINLINAVRLVAKAANDGILKFAVVTGRKSI.

Positions 71 to 80 are SAM motif I; sequence MLDVGSGLGG. Residues 134 to 142 form an SAM motif II region; that stretch reads GKFDVVFTI. Positions 161–170 are SAM motif III; it reads VAAPGAAIII. Positions 287–289 match the Microbody targeting signal motif; sequence KSI.

It belongs to the class I-like SAM-binding methyltransferase superfamily. gTMT family. Homodimer. Mainly expressed in young leaves, and, to a lower extent, in mature leaves, flowers, stems and roots (at protein level).

The protein localises to the thylakoid. It localises to the peroxisome. The catalysed reaction is (3R)-3-hydroxy-16-methoxy-2,3-dihydrotabersonine + S-adenosyl-L-methionine = deacetoxyvindoline + S-adenosyl-L-homocysteine + H(+). It functions in the pathway alkaloid biosynthesis; vindoline biosynthesis. With respect to regulation, inhibited by gamma-tocopherol. S-adenosyl-L-methionine-dependent N-methyltransferase that catalyzes a nitrogen methylation involved in vindoline biosynthesis. Displays a strict requirement for a 2,3-dihydro bond in the aspidosperma skeleton. Can use 2,3-dihydrotabersonine, 2,3-dihydro-3-hydroxytabersonine and 2,3,6,7-tetraydro-3-hydroxytabersonine as substrates, but not tabersonine, vincadifformine, 21-hydroxycyclolochnericine, tryptamine, norharmane, harmaline, catharanthine, norajmaline, ajmaline, serpentine, ajmalicine, yohimbine or gamma-tocopherol. Inactive with picrinine as substrate. The sequence is that of 3-hydroxy-16-methoxy-2,3-dihydrotabersonine N-methyltransferase from Catharanthus roseus (Madagascar periwinkle).